A 776-amino-acid polypeptide reads, in one-letter code: Endonuclease MutS2 (776 aa).

330–337 (GPNTGGKT) lines the ATP pocket. In terms of domain architecture, Smr spans 701–776 (LDLRGMRYEE…GSGATIAILK (76 aa)).

Belongs to the DNA mismatch repair MutS family. MutS2 subfamily. In terms of assembly, homodimer. Binds to stalled ribosomes, contacting rRNA.

Functionally, endonuclease that is involved in the suppression of homologous recombination and thus may have a key role in the control of bacterial genetic diversity. Acts as a ribosome collision sensor, splitting the ribosome into its 2 subunits. Detects stalled/collided 70S ribosomes which it binds and splits by an ATP-hydrolysis driven conformational change. Acts upstream of the ribosome quality control system (RQC), a ribosome-associated complex that mediates the extraction of incompletely synthesized nascent chains from stalled ribosomes and their subsequent degradation. Probably generates substrates for RQC. This Lactococcus lactis subsp. cremoris (strain MG1363) protein is Endonuclease MutS2.